An 86-amino-acid chain; its full sequence is MSEQEDQEAPKQFTFGTVGFDARFPNTNQTKHCFQSYIDYFRCIKAKGEDFVPCKQFWHAYQSLCPMEWVERWDEQRENGTFPAPI.

Residues 30–73 (TKHCFQSYIDYFRCIKAKGEDFVPCKQFWHAYQSLCPMEWVERW) form the CHCH domain. The Cx9C motif signature appears at 33–43 (CFQSYIDYFRC). 2 disulfides stabilise this stretch: Cys-33–Cys-65 and Cys-43–Cys-54. Residues 54–65 (CKQFWHAYQSLC) carry the Cx10C motif motif.

The protein belongs to the cytochrome c oxidase subunit 6B family. Component of the cytochrome c oxidase (complex IV, CIV), a multisubunit enzyme composed of a catalytic core of 3 subunits and several supernumerary subunits. The complex exists as a monomer or a dimer and forms supercomplexes (SCs) in the inner mitochondrial membrane with ubiquinol-cytochrome c oxidoreductase (cytochrome b-c1 complex, complex III, CIII).

The protein localises to the mitochondrion inner membrane. Its pathway is energy metabolism; oxidative phosphorylation. Its function is as follows. Component of the cytochrome c oxidase, the last enzyme in the mitochondrial electron transport chain which drives oxidative phosphorylation. The respiratory chain contains 3 multisubunit complexes succinate dehydrogenase (complex II, CII), ubiquinol-cytochrome c oxidoreductase (cytochrome b-c1 complex, complex III, CIII) and cytochrome c oxidase (complex IV, CIV), that cooperate to transfer electrons derived from NADH and succinate to molecular oxygen, creating an electrochemical gradient over the inner membrane that drives transmembrane transport and the ATP synthase. Cytochrome c oxidase is the component of the respiratory chain that catalyzes the reduction of oxygen to water. Electrons originating from reduced cytochrome c in the intermembrane space (IMS) are transferred via the dinuclear copper A center (CU(A)) of subunit 2 and heme A of subunit 1 to the active site in subunit 1, a binuclear center (BNC) formed by heme A3 and copper B (CU(B)). The BNC reduces molecular oxygen to 2 water molecules using 4 electrons from cytochrome c in the IMS and 4 protons from the mitochondrial matrix. This chain is Cytochrome c oxidase subunit 12, mitochondrial (cox12), found in Schizosaccharomyces pombe (strain 972 / ATCC 24843) (Fission yeast).